The chain runs to 163 residues: Large ribosomal subunit protein uL13m (163 aa).

Residue Ser-2 is modified to N-acetylserine. The propeptide occupies 2-4 (SQK).

The protein belongs to the universal ribosomal protein uL13 family. As to quaternary structure, component of the mitochondrial large ribosomal subunit (mt-LSU). Mature yeast 74S mitochondrial ribosomes consist of a small (37S) and a large (54S) subunit. The 37S small subunit contains a 15S ribosomal RNA (15S mt-rRNA) and 34 different proteins. The 54S large subunit contains a 21S rRNA (21S mt-rRNA) and 46 different proteins.

It is found in the mitochondrion. Functionally, component of the mitochondrial ribosome (mitoribosome), a dedicated translation machinery responsible for the synthesis of mitochondrial genome-encoded proteins, including at least some of the essential transmembrane subunits of the mitochondrial respiratory chain. The mitoribosomes are attached to the mitochondrial inner membrane and translation products are cotranslationally integrated into the membrane. This Saccharomyces cerevisiae (strain ATCC 204508 / S288c) (Baker's yeast) protein is Large ribosomal subunit protein uL13m (MRPL23).